The following is a 128-amino-acid chain: uncharacterized protein (128 aa).

The next 4 membrane-spanning stretches (helical) occupy residues 2–22 (LPFY…LTVL), 34–54 (FLYD…AAVC), 64–84 (LPVL…ALFL), and 108–128 (LGLF…TLFL).

The protein localises to the cell membrane. This is an uncharacterized protein from Treponema pallidum (strain Nichols).